A 133-amino-acid polypeptide reads, in one-letter code: Small ribosomal subunit protein uS8 (133 aa).

It belongs to the universal ribosomal protein uS8 family. As to quaternary structure, part of the 30S ribosomal subunit. Contacts proteins S5 and S12.

Its function is as follows. One of the primary rRNA binding proteins, it binds directly to 16S rRNA central domain where it helps coordinate assembly of the platform of the 30S subunit. This chain is Small ribosomal subunit protein uS8, found in Parasynechococcus marenigrum (strain WH8102).